The primary structure comprises 214 residues: Thymidylate kinase (214 aa).

15-22 (GLEGAGKT) is an ATP binding site.

Belongs to the thymidylate kinase family.

The catalysed reaction is dTMP + ATP = dTDP + ADP. Phosphorylation of dTMP to form dTDP in both de novo and salvage pathways of dTTP synthesis. The protein is Thymidylate kinase of Haemophilus ducreyi (strain 35000HP / ATCC 700724).